Here is a 32-residue protein sequence, read N- to C-terminus: Cruzioseptin-9 (32 aa).

A Glutamine amide modification is found at Gln29. A propeptide spanning residues 31 to 32 (EQ) is cleaved from the precursor.

As to expression, expressed by the skin glands.

The protein localises to the secreted. In terms of biological role, has antimicrobial activity. The sequence is that of Cruzioseptin-9 from Cruziohyla calcarifer (Splendid leaf frog).